The following is a 154-amino-acid chain: Ribosomal RNA large subunit methyltransferase H (154 aa).

S-adenosyl-L-methionine is bound by residues Leu70, Gly102, and Leu121 to Leu126.

Belongs to the RNA methyltransferase RlmH family. As to quaternary structure, homodimer.

The protein resides in the cytoplasm. The enzyme catalyses pseudouridine(1915) in 23S rRNA + S-adenosyl-L-methionine = N(3)-methylpseudouridine(1915) in 23S rRNA + S-adenosyl-L-homocysteine + H(+). Its function is as follows. Specifically methylates the pseudouridine at position 1915 (m3Psi1915) in 23S rRNA. This is Ribosomal RNA large subunit methyltransferase H from Geobacter sp. (strain M21).